An 872-amino-acid chain; its full sequence is Alanine--tRNA ligase (872 aa).

Zn(2+) is bound by residues His-566, His-570, Cys-668, and His-672.

It belongs to the class-II aminoacyl-tRNA synthetase family. Zn(2+) is required as a cofactor.

It localises to the cytoplasm. The enzyme catalyses tRNA(Ala) + L-alanine + ATP = L-alanyl-tRNA(Ala) + AMP + diphosphate. In terms of biological role, catalyzes the attachment of alanine to tRNA(Ala) in a two-step reaction: alanine is first activated by ATP to form Ala-AMP and then transferred to the acceptor end of tRNA(Ala). Also edits incorrectly charged Ser-tRNA(Ala) and Gly-tRNA(Ala) via its editing domain. This chain is Alanine--tRNA ligase, found in Lactococcus lactis subsp. cremoris (strain MG1363).